The chain runs to 240 residues: Uridylate kinase (240 aa).

13–16 (KASG) provides a ligand contact to ATP. Residues 21-26 (GGQGFG) are involved in allosteric activation by GTP. Glycine 55 lines the UMP pocket. ATP contacts are provided by glycine 56 and arginine 60. Residues aspartate 75 and 136 to 143 (TGNPFFTT) each bind UMP. Residues threonine 163, glutamine 164, tyrosine 169, and aspartate 172 each contribute to the ATP site.

Belongs to the UMP kinase family. Homohexamer.

It localises to the cytoplasm. It catalyses the reaction UMP + ATP = UDP + ADP. It participates in pyrimidine metabolism; CTP biosynthesis via de novo pathway; UDP from UMP (UMPK route): step 1/1. Its activity is regulated as follows. Allosterically activated by GTP. Inhibited by UTP. Functionally, catalyzes the reversible phosphorylation of UMP to UDP. The chain is Uridylate kinase from Rhizobium johnstonii (strain DSM 114642 / LMG 32736 / 3841) (Rhizobium leguminosarum bv. viciae).